The chain runs to 414 residues: Transmembrane protein 184A (414 aa).

The disordered stretch occupies residues 1-32 (MTDTPGLLGTPLAWTPPARPAGPQMERAGNGS). Transmembrane regions (helical) follow at residues 48-68 (VSGV…YLHL), 83-103 (LLFI…LLGG), 120-140 (FVIY…SAIM), 177-197 (LQFC…QAFG), 211-231 (LYIT…LFLF), 248-268 (FLTI…LAIL), and 290-310 (VAAG…SIAL). Disordered regions lie at residues 323–342 (TESS…GLKE) and 364–414 (YTQQ…AEEL). Polar residues predominate over residues 379 to 388 (SVPSPRTPTH).

Belongs to the TMEM184 family. As to expression, expressed in vascular cells (at protein level).

The protein resides in the cell membrane. It localises to the cytoplasm. The protein localises to the perinuclear region. It is found in the cytoplasmic vesicle membrane. Its subcellular location is the early endosome membrane. The protein resides in the endosome. It localises to the cytoplasmic vesicle. The protein localises to the secretory vesicle membrane. In terms of biological role, acts as a heparin receptor in vascular cells. May be involved in vesicle transport in exocrine cells and Sertoli cells. This Bos taurus (Bovine) protein is Transmembrane protein 184A (TMEM184A).